The sequence spans 363 residues: MSAIFNFCAGPAMLPPAVMQKAQKELLNWNGQGVSVMEVSHRSKEFIALTEQAEADLRQLMDIPFNYHVLFMHGGGRGQFSAVVNNFLGNDGKALYLVDGSWSKAAVEEAEKLAGKDKIDTIDIVSTVQGKREVSIPDLTQIDKDYRYLHYCPNETVDGIEIFESINSPWPVIADMSSNILSRKIDVSQFGLIYAGAQKNIGPSGLSIVIVRDDMLVLPSLPQSSIMDYRLAVENDSMYNTPPTFAWYLAAEVFSWLKSVGGVCEMEKLNLEKAKRLYQCIDELDFYVSGVAKQNRSRMNVTFQLTNSELNSQFLEEAQVAGLVALKGHRSVGGMRASIYNAMPLEGVDTLVEFMQAFAAKHS.

Position 42 (arginine 42) interacts with L-glutamate. Pyridoxal 5'-phosphate-binding positions include glycine 76–arginine 77, tryptophan 102, threonine 156, aspartate 175, and glutamine 198. Lysine 199 bears the N6-(pyridoxal phosphate)lysine mark. Residue asparagine 240–threonine 241 participates in pyridoxal 5'-phosphate binding.

Belongs to the class-V pyridoxal-phosphate-dependent aminotransferase family. SerC subfamily. Homodimer. Requires pyridoxal 5'-phosphate as cofactor.

The protein resides in the cytoplasm. It catalyses the reaction O-phospho-L-serine + 2-oxoglutarate = 3-phosphooxypyruvate + L-glutamate. The catalysed reaction is 4-(phosphooxy)-L-threonine + 2-oxoglutarate = (R)-3-hydroxy-2-oxo-4-phosphooxybutanoate + L-glutamate. Its pathway is amino-acid biosynthesis; L-serine biosynthesis; L-serine from 3-phospho-D-glycerate: step 2/3. It participates in cofactor biosynthesis; pyridoxine 5'-phosphate biosynthesis; pyridoxine 5'-phosphate from D-erythrose 4-phosphate: step 3/5. In terms of biological role, catalyzes the reversible conversion of 3-phosphohydroxypyruvate to phosphoserine and of 3-hydroxy-2-oxo-4-phosphonooxybutanoate to phosphohydroxythreonine. This chain is Phosphoserine aminotransferase, found in Shewanella halifaxensis (strain HAW-EB4).